Reading from the N-terminus, the 251-residue chain is Large ribosomal subunit protein uL2 (251 aa).

A compositionally biased stretch (basic residues) spans 1-12 (MGKRLRVQRHGR). Residues 1 to 22 (MGKRLRVQRHGRGTPQWRNRGH) are disordered.

This sequence belongs to the universal ribosomal protein uL2 family. As to quaternary structure, part of the 50S ribosomal subunit. Forms a bridge to the 30S subunit in the 70S ribosome.

Functionally, one of the primary rRNA binding proteins. Required for association of the 30S and 50S subunits to form the 70S ribosome, for tRNA binding and peptide bond formation. It has been suggested to have peptidyltransferase activity; this is somewhat controversial. Makes several contacts with the 16S rRNA in the 70S ribosome. The protein is Large ribosomal subunit protein uL2 of Ignicoccus hospitalis (strain KIN4/I / DSM 18386 / JCM 14125).